A 465-amino-acid polypeptide reads, in one-letter code: Cysteine--tRNA ligase (465 aa).

Residue Cys-27 coordinates Zn(2+). A 'HIGH' region motif is present at residues 29–39 (PTVYDDAHLGH). Zn(2+) contacts are provided by Cys-207, His-237, and Glu-241. Residues 269–273 (KMSKS) carry the 'KMSKS' region motif. Lys-272 is a binding site for ATP.

Belongs to the class-I aminoacyl-tRNA synthetase family. As to quaternary structure, monomer. Zn(2+) serves as cofactor.

Its subcellular location is the cytoplasm. It carries out the reaction tRNA(Cys) + L-cysteine + ATP = L-cysteinyl-tRNA(Cys) + AMP + diphosphate. The protein is Cysteine--tRNA ligase of Helicobacter pylori (strain G27).